Here is a 236-residue protein sequence, read N- to C-terminus: RNA-binding protein 24 (236 aa).

Residues 11–88 enclose the RRM domain; it reads TKIFVGGLPY…RKANVNLAYL (78 aa). The segment at 175–199 is necessary for interaction with EIF4E; it reads QYPYAASPAAAGYVTTGGYSYAVQQ.

Interacts with EIF4E; this interaction prevents EIF4E from binding to p53/TP53 mRNA and inhibits the assembly of translation initiation complex. In terms of tissue distribution, expressed strongly in heart and skeletal muscles. Weakly expressed in intestine, aorta, liver, lung, kidney, uterus and bladder.

The protein localises to the nucleus. It localises to the cytoplasm. Functionally, multifunctional RNA-binding protein involved in the regulation of pre-mRNA splicing, mRNA stability and mRNA translation important for cell fate decision and differentiation. Plays a major role in pre-mRNA alternative splicing regulation. Mediates preferentially muscle-specific exon inclusion in numerous mRNAs important for striated cardiac and skeletal muscle cell differentiation. Binds to intronic splicing enhancer (ISE) composed of stretches of GU-rich motifs localized in flanking intron of exon that will be included by alternative splicing. Involved in embryonic stem cell (ESC) transition to cardiac cell differentiation by promoting pre-mRNA alternative splicing events of several pluripotency and/or differentiation genes. Plays a role in the regulation of mRNA stability. Binds to 3'-untranslated region (UTR) AU-rich elements in target transcripts, such as CDKN1A and MYOG, leading to maintain their stabilities. Involved in myogenic differentiation by regulating MYOG levels. Binds to multiple regions in the mRNA 3'-UTR of TP63, hence inducing its destabilization. Also promotes the destabilization of the CHRM2 mRNA via its binding to a region in the coding sequence. Plays a role in the regulation of mRNA translation. Mediates repression of p53/TP53 mRNA translation through its binding to U-rich element in the 3'-UTR, hence preventing EIF4E from binding to p53/TP53 mRNA and translation initiation. Binds to a huge amount of mRNAs. Required for embryonic heart development, sarcomer and M-band formation in striated muscles. Together with RBM20, promotes the expression of short isoforms of PDLIM5/ENH in cardiomyocytes. In Mus musculus (Mouse), this protein is RNA-binding protein 24.